Here is a 384-residue protein sequence, read N- to C-terminus: Succinyl-diaminopimelate desuccinylase (384 aa).

His71 contributes to the Zn(2+) binding site. Asp73 is an active-site residue. Asp104 contacts Zn(2+). Glu139 acts as the Proton acceptor in catalysis. Zn(2+) is bound by residues Glu140, Glu168, and His357.

Belongs to the peptidase M20A family. DapE subfamily. As to quaternary structure, homodimer. Requires Zn(2+) as cofactor. Co(2+) serves as cofactor.

It carries out the reaction N-succinyl-(2S,6S)-2,6-diaminopimelate + H2O = (2S,6S)-2,6-diaminopimelate + succinate. Its pathway is amino-acid biosynthesis; L-lysine biosynthesis via DAP pathway; LL-2,6-diaminopimelate from (S)-tetrahydrodipicolinate (succinylase route): step 3/3. Catalyzes the hydrolysis of N-succinyl-L,L-diaminopimelic acid (SDAP), forming succinate and LL-2,6-diaminopimelate (DAP), an intermediate involved in the bacterial biosynthesis of lysine and meso-diaminopimelic acid, an essential component of bacterial cell walls. The chain is Succinyl-diaminopimelate desuccinylase from Afipia carboxidovorans (strain ATCC 49405 / DSM 1227 / KCTC 32145 / OM5) (Oligotropha carboxidovorans).